We begin with the raw amino-acid sequence, 355 residues long: Putative inositol monophosphatase 3 (355 aa).

Residues 16–36 form a helical membrane-spanning segment; sequence VPATIFAILLTIVLVYFLNFH. Residues E127, D167, L169, D170, and D292 each contribute to the Mg(2+) site. E127 provides a ligand contact to substrate. Substrate-binding positions include 169-172 and D292; that span reads LDAT.

Belongs to the inositol monophosphatase superfamily. Requires Mg(2+) as cofactor.

Its subcellular location is the membrane. It carries out the reaction a myo-inositol phosphate + H2O = myo-inositol + phosphate. The protein operates within polyol metabolism; myo-inositol biosynthesis; myo-inositol from D-glucose 6-phosphate: step 2/2. This chain is Putative inositol monophosphatase 3, found in Drosophila pseudoobscura pseudoobscura (Fruit fly).